A 324-amino-acid chain; its full sequence is Polyketide biosynthesis acyltransferase homolog PksD (324 aa).

Residue S99 is part of the active site.

It is found in the cytoplasm. It participates in antibiotic biosynthesis; bacillaene biosynthesis. Functionally, probably involved in some intermediate steps for the synthesis of the antibiotic polyketide bacillaene which is involved in secondary metabolism. This Bacillus subtilis (strain 168) protein is Polyketide biosynthesis acyltransferase homolog PksD (pksD).